The following is an 897-amino-acid chain: Isoleucine--tRNA ligase (897 aa).

The 'HIGH' region signature appears at 59 to 69 (PYANGDIHVGH). Residue E553 participates in L-isoleucyl-5'-AMP binding. The 'KMSKS' region signature appears at 594–598 (KMSKS). Residue K597 participates in ATP binding. The Zn(2+) site is built by C866, C869, C883, and C886.

The protein belongs to the class-I aminoacyl-tRNA synthetase family. IleS type 1 subfamily. In terms of assembly, monomer. Zn(2+) is required as a cofactor.

The protein resides in the cytoplasm. The enzyme catalyses tRNA(Ile) + L-isoleucine + ATP = L-isoleucyl-tRNA(Ile) + AMP + diphosphate. Its function is as follows. Catalyzes the attachment of isoleucine to tRNA(Ile). As IleRS can inadvertently accommodate and process structurally similar amino acids such as valine, to avoid such errors it has two additional distinct tRNA(Ile)-dependent editing activities. One activity is designated as 'pretransfer' editing and involves the hydrolysis of activated Val-AMP. The other activity is designated 'posttransfer' editing and involves deacylation of mischarged Val-tRNA(Ile). The sequence is that of Isoleucine--tRNA ligase from Mycoplasmopsis synoviae (strain 53) (Mycoplasma synoviae).